Reading from the N-terminus, the 874-residue chain is Oxysterol-binding protein-related protein 5 (874 aa).

A disordered region spans residues M1–V71. S12 is subject to Phosphoserine. Residues V93 to D123 are a coiled coil. The PH domain maps to V126 to R243. Disordered regions lie at residues Q255–T277 and F299–R338. The span at Q261–T277 shows a compositional bias: polar residues. The span at F299 to A308 shows a compositional bias: basic and acidic residues. Residues L383–L388, K445–N448, and H477–H478 contribute to the a 1,2-diacyl-sn-glycero-3-phospho-(1D-myo-inositol 4-phosphate) site. A 1,2-diacyl-sn-glycero-3-phospho-L-serine contacts are provided by residues L383 to L388 and N448. S503 contacts a 1,2-diacyl-sn-glycero-3-phospho-L-serine. Residues G660–Q684 show a composition bias toward basic and acidic residues. Disordered regions lie at residues G660–Q685 and G739–S798. A 1,2-diacyl-sn-glycero-3-phospho-(1D-myo-inositol 4-phosphate) contacts are provided by K669, E673, and R677. A phosphoserine mark is found at S746 and S749. Residues P754–S764 show a composition bias toward basic and acidic residues. Residues D765 to E782 show a composition bias toward polar residues. Residues S855–L873 form a helical membrane-spanning segment.

It belongs to the OSBP family.

The protein localises to the endoplasmic reticulum membrane. Functionally, lipid transporter involved in lipid countertransport between the endoplasmic reticulum and the plasma membrane: specifically exchanges phosphatidylserine with phosphatidylinositol 4-phosphate (PI4P), delivering phosphatidylserine to the plasma membrane in exchange for PI4P, which is degraded by the SAC1/SACM1L phosphatase in the endoplasmic reticulum. Binds phosphatidylserine and PI4P in a mutually exclusive manner. May cooperate with NPC1 to mediate the exit of cholesterol from endosomes/lysosomes. Binds 25-hydroxycholesterol and cholesterol. In Mus musculus (Mouse), this protein is Oxysterol-binding protein-related protein 5 (Osbpl5).